The following is a 231-amino-acid chain: Cutinase 2 (231 aa).

The signal sequence occupies residues 1-16 (MKFFALTTLLAATASA). C48 and C126 are joined by a disulfide. Residue S137 is the Nucleophile of the active site. A disulfide bridge links C188 with C195. D192 is a catalytic residue. Catalysis depends on H205, which acts as the Proton donor/acceptor.

Belongs to the cutinase family. In terms of processing, the 2 disulfide bonds play a critical role in holding the catalytic residues in juxta-position; reduction of the disulfide bridges results in the complete inactivation of the enzyme.

The protein localises to the secreted. It catalyses the reaction cutin + H2O = cutin monomers.. Catalyzes the hydrolysis of complex carboxylic polyesters found in the cell wall of plants. Degrades cutin, a macromolecule that forms the structure of the plant cuticle. Allows pathogenic fungi to penetrate through the cuticular barrier into the host plant during the initial stage of fungal infection. The protein is Cutinase 2 (CUT2) of Fusarium vanettenii (Neocosmospora pisi).